Reading from the N-terminus, the 157-residue chain is Transcriptional regulator AzlB (157 aa).

Residues 5–66 (LDETDKAILR…IVDEKKLGIE (62 aa)) form the HTH asnC-type domain. A DNA-binding region (H-T-H motif) is located at residues 24-43 (NLNLSKKIGLSPSACLARTK).

Functionally, transcriptional repressor of the azlBCD operon involved in branched-chain amino acid transport. The polypeptide is Transcriptional regulator AzlB (azlB) (Bacillus subtilis (strain 168)).